We begin with the raw amino-acid sequence, 301 residues long: GTPase Era (301 aa).

An Era-type G domain is found at Lys6–Ile173. The interval Gly14–Ser21 is G1. Gly14–Ser21 contacts GTP. The segment at Gln40 to Asn44 is G2. Positions Asp61–Gly64 are G3. GTP-binding positions include Asp61–Ile65 and Asn123–Asp126. Residues Asn123 to Asp126 form a G4 region. The interval Ile152–Ala154 is G5. In terms of domain architecture, KH type-2 spans Thr204 to Lys282.

It belongs to the TRAFAC class TrmE-Era-EngA-EngB-Septin-like GTPase superfamily. Era GTPase family. In terms of assembly, monomer.

It localises to the cytoplasm. It is found in the cell membrane. In terms of biological role, an essential GTPase that binds both GDP and GTP, with rapid nucleotide exchange. Plays a role in 16S rRNA processing and 30S ribosomal subunit biogenesis and possibly also in cell cycle regulation and energy metabolism. In Listeria welshimeri serovar 6b (strain ATCC 35897 / DSM 20650 / CCUG 15529 / CIP 8149 / NCTC 11857 / SLCC 5334 / V8), this protein is GTPase Era.